Here is a 64-residue protein sequence, read N- to C-terminus: Alpha-conotoxin-like Lt1.3 (64 aa).

Positions 1-21 are cleaved as a signal peptide; that stretch reads MGMRMMFTMFLLVVLTTTVVS. Residues 22 to 45 constitute a propeptide that is removed on maturation; the sequence is FNLDRESNHENRRTSNQITRGMWD. Intrachain disulfides connect cysteine 47-cysteine 53 and cysteine 48-cysteine 61. Residues 49 to 51 are lacks the Ser-Xaa-Pro motif that is crucial for potent interaction with nAChR; it reads DDP.

This sequence belongs to the conotoxin A superfamily. In terms of tissue distribution, expressed by the venom duct.

It is found in the secreted. Its function is as follows. Alpha-conotoxins act on postsynaptic membranes, they bind to the nicotinic acetylcholine receptors (nAChR) and thus inhibit them. Has possibly a distinct nAChR binding mode from other alpha-conotoxins, due to a different three residue motif (lacks the Ser-Xaa-Pro motif). The protein is Alpha-conotoxin-like Lt1.3 of Conus litteratus (Lettered cone).